Consider the following 434-residue polypeptide: Adenylosuccinate synthetase (434 aa).

Residues 22–28 and 50–52 contribute to the GTP site; these read GDEGKGK and GHT. Aspartate 23 serves as the catalytic Proton acceptor. 2 residues coordinate Mg(2+): aspartate 23 and glycine 50. IMP is bound by residues 23-26, 48-51, threonine 139, arginine 153, glutamine 234, threonine 249, and arginine 313; these read DEGK and NAGH. Histidine 51 (proton donor) is an active-site residue. Substrate is bound at residue 309–315; that stretch reads ATTGRKR. GTP is bound by residues arginine 315, 341–343, and 423–425; these read KLD and SVG.

Belongs to the adenylosuccinate synthetase family. As to quaternary structure, homodimer. The cofactor is Mg(2+).

It is found in the cytoplasm. It carries out the reaction IMP + L-aspartate + GTP = N(6)-(1,2-dicarboxyethyl)-AMP + GDP + phosphate + 2 H(+). It participates in purine metabolism; AMP biosynthesis via de novo pathway; AMP from IMP: step 1/2. Plays an important role in the de novo pathway of purine nucleotide biosynthesis. Catalyzes the first committed step in the biosynthesis of AMP from IMP. This is Adenylosuccinate synthetase from Chlorobium limicola (strain DSM 245 / NBRC 103803 / 6330).